The sequence spans 45 residues: Large ribosomal subunit protein bL34 (45 aa).

Positions 1–45 are disordered; the sequence is MTKRTFQPNNRRRARKHGFRARMRTRAGRAILSARRGKNRAELSA. Residues 10–27 show a composition bias toward basic residues; that stretch reads NRRRARKHGFRARMRTRA.

The protein belongs to the bacterial ribosomal protein bL34 family.

In Micrococcus luteus (strain ATCC 4698 / DSM 20030 / JCM 1464 / CCM 169 / CCUG 5858 / IAM 1056 / NBRC 3333 / NCIMB 9278 / NCTC 2665 / VKM Ac-2230) (Micrococcus lysodeikticus), this protein is Large ribosomal subunit protein bL34.